Reading from the N-terminus, the 289-residue chain is Iodotyrosine deiodinase 1 (289 aa).

Residues M1–K21 traverse the membrane as a helical segment. The segment covering D47–E58 has biased composition (basic and acidic residues). Residues D47–E69 form a disordered region. Residues E59–E69 are compositionally biased toward acidic residues. FMN-binding positions include R100–R104, S128, and S128–G129. The 3,5-diiodo-L-tyrosine site is built by A130, E157, Y161, and K182. 3-iodo-L-tyrosine contacts are provided by A130, E157, Y161, and K182. Residues T237 to T239 and R279 contribute to the FMN site.

This sequence belongs to the nitroreductase family. In terms of assembly, homodimer. It depends on FMN as a cofactor.

It localises to the cell membrane. The protein localises to the cytoplasmic vesicle membrane. The catalysed reaction is 2 iodide + L-tyrosine + 2 NADP(+) = 3,5-diiodo-L-tyrosine + 2 NADPH + H(+). It carries out the reaction iodide + L-tyrosine + NADP(+) = 3-iodo-L-tyrosine + NADPH. The enzyme catalyses 3-iodo-L-tyrosine + iodide + NADP(+) = 3,5-diiodo-L-tyrosine + NADPH + H(+). It catalyses the reaction L-tyrosine + chloride + NADP(+) = 3-chloro-L-tyrosine + NADPH. The catalysed reaction is bromide + L-tyrosine + NADP(+) = 3-bromo-L-tyrosine + NADPH. Its function is as follows. Catalyzes the dehalogenation of halotyrosines such as 3-bromo-L-tyrosine, 3-chloro-L-tyrosine, 3-iodo-L-tyrosine and 3,5-diiodo-L-tyrosine. During thyroid hormone biosynthesis, facilitates iodide salvage by catalysing the oxidative NADPH-dependent deiodination of the halogenated by-products of thyroid hormone production, monoiodotyrosine (L-MIT) and diiodotyrosine (L-DIT). The scavanged iodide can then reenter the hormone-producing pathways. Acts more efficiently on 3-iodo-L-tyrosine than 3,5-diiodo-L-tyrosine. The chain is Iodotyrosine deiodinase 1 (IYD) from Pongo abelii (Sumatran orangutan).